The primary structure comprises 138 residues: 1,4-dihydroxy-2-naphthoyl-CoA hydrolase (138 aa).

Residue aspartate 14 is part of the active site.

Belongs to the 4-hydroxybenzoyl-CoA thioesterase family. DHNA-CoA hydrolase subfamily.

The catalysed reaction is 1,4-dihydroxy-2-naphthoyl-CoA + H2O = 1,4-dihydroxy-2-naphthoate + CoA + H(+). The protein operates within cofactor biosynthesis; phylloquinone biosynthesis. Its pathway is quinol/quinone metabolism; 1,4-dihydroxy-2-naphthoate biosynthesis; 1,4-dihydroxy-2-naphthoate from chorismate: step 7/7. In terms of biological role, catalyzes the hydrolysis of 1,4-dihydroxy-2-naphthoyl-CoA (DHNA-CoA) to 1,4-dihydroxy-2-naphthoate (DHNA), a reaction involved in phylloquinone (vitamin K1) biosynthesis. This is 1,4-dihydroxy-2-naphthoyl-CoA hydrolase from Rippkaea orientalis (strain PCC 8801 / RF-1) (Cyanothece sp. (strain PCC 8801)).